The chain runs to 510 residues: Chromosomal replication initiator protein DnaA (510 aa).

The tract at residues 1 to 107 (MTNDPGSGFA…VRIAPPPADD (107 aa)) is domain I, interacts with DnaA modulators. The segment at 107–169 (DDDDSVAAAV…ADTSASAGGT (63 aa)) is domain II. The tract at residues 119-168 (PGLEASPETSQEVSDEIDDFGENAPNSRQSWPTHFKKRSTDADTSASAGG) is disordered. Residues 170 to 386 (SLNRRYTFDT…GALIRVTAFA (217 aa)) form a domain III, AAA+ region region. Positions 214, 216, 217, and 218 each coordinate ATP. Residues 387-510 (SLNKTPIDKA…TTRIRQRSKR (124 aa)) form a domain IV, binds dsDNA region.

Belongs to the DnaA family. Oligomerizes as a right-handed, spiral filament on DNA at oriC.

The protein localises to the cytoplasm. In terms of biological role, plays an essential role in the initiation and regulation of chromosomal replication. ATP-DnaA binds to the origin of replication (oriC) to initiate formation of the DNA replication initiation complex once per cell cycle. Binds the DnaA box (a 9 base pair repeat at the origin) and separates the double-stranded (ds)DNA. Forms a right-handed helical filament on oriC DNA; dsDNA binds to the exterior of the filament while single-stranded (ss)DNA is stabiized in the filament's interior. The ATP-DnaA-oriC complex binds and stabilizes one strand of the AT-rich DNA unwinding element (DUE), permitting loading of DNA polymerase. After initiation quickly degrades to an ADP-DnaA complex that is not apt for DNA replication. Binds acidic phospholipids. This is Chromosomal replication initiator protein DnaA from Mycobacterium marinum (strain ATCC BAA-535 / M).